A 386-amino-acid polypeptide reads, in one-letter code: Dual-specificity RNA methyltransferase RlmN (386 aa).

Glu-96 (proton acceptor) is an active-site residue. Residues 102 to 340 (ENDRATLCVS…VITRRTRGED (239 aa)) enclose the Radical SAM core domain. The cysteines at positions 109 and 345 are disulfide-linked. [4Fe-4S] cluster is bound by residues Cys-116, Cys-120, and Cys-123. Residues 170–171 (GE), Ser-202, 224–226 (SIH), and Asn-302 contribute to the S-adenosyl-L-methionine site. Cys-345 acts as the S-methylcysteine intermediate in catalysis.

It belongs to the radical SAM superfamily. RlmN family. [4Fe-4S] cluster serves as cofactor.

It localises to the cytoplasm. It catalyses the reaction adenosine(2503) in 23S rRNA + 2 reduced [2Fe-2S]-[ferredoxin] + 2 S-adenosyl-L-methionine = 2-methyladenosine(2503) in 23S rRNA + 5'-deoxyadenosine + L-methionine + 2 oxidized [2Fe-2S]-[ferredoxin] + S-adenosyl-L-homocysteine. The catalysed reaction is adenosine(37) in tRNA + 2 reduced [2Fe-2S]-[ferredoxin] + 2 S-adenosyl-L-methionine = 2-methyladenosine(37) in tRNA + 5'-deoxyadenosine + L-methionine + 2 oxidized [2Fe-2S]-[ferredoxin] + S-adenosyl-L-homocysteine. Functionally, specifically methylates position 2 of adenine 2503 in 23S rRNA and position 2 of adenine 37 in tRNAs. m2A2503 modification seems to play a crucial role in the proofreading step occurring at the peptidyl transferase center and thus would serve to optimize ribosomal fidelity. This is Dual-specificity RNA methyltransferase RlmN from Colwellia psychrerythraea (strain 34H / ATCC BAA-681) (Vibrio psychroerythus).